A 146-amino-acid polypeptide reads, in one-letter code: Hemoglobin subunit beta (146 aa).

The Globin domain occupies 2–146 (QWTAEEKQLI…VAHALARKYH (145 aa)). Residues His-63 and His-92 each contribute to the heme b site.

This sequence belongs to the globin family. Heterotetramer of two alpha chains and two beta chains. Red blood cells.

In terms of biological role, involved in oxygen transport from the lung to the various peripheral tissues. The protein is Hemoglobin subunit beta (HBB) of Passer montanus (Eurasian tree sparrow).